We begin with the raw amino-acid sequence, 139 residues long: Putative pre-16S rRNA nuclease (139 aa).

It belongs to the YqgF nuclease family.

The protein localises to the cytoplasm. Its function is as follows. Could be a nuclease involved in processing of the 5'-end of pre-16S rRNA. This is Putative pre-16S rRNA nuclease from Dictyoglomus thermophilum (strain ATCC 35947 / DSM 3960 / H-6-12).